Here is a 578-residue protein sequence, read N- to C-terminus: Rhamnogalacturonate lyase (578 aa).

Residues 1–27 (MHMNKPLQAWRTPLLTLIFVLPLTATG) form the signal peptide.

It belongs to the polysaccharide lyase 4 family.

Its subcellular location is the secreted. The enzyme catalyses Endotype eliminative cleavage of L-alpha-rhamnopyranosyl-(1-&gt;4)-alpha-D-galactopyranosyluronic acid bonds of rhamnogalacturonan I domains in ramified hairy regions of pectin leaving L-rhamnopyranose at the reducing end and 4-deoxy-4,5-unsaturated D-galactopyranosyluronic acid at the non-reducing end.. Degrades the rhamnogalacturonan I (RG-I) backbone of pectin. Is required for the full virulence of E.chrysanthemi strain 3937 as it is involved in rotting of plant tissue. The sequence is that of Rhamnogalacturonate lyase (rhiE) from Dickeya dadantii (strain 3937) (Erwinia chrysanthemi (strain 3937)).